The sequence spans 348 residues: D-alanine--D-alanine ligase (348 aa).

Residues 132–334 (KRVLESIGIP…YPDLIEELVT (203 aa)) form the ATP-grasp domain. 162 to 217 (LARLTFPIFVKPANMGSSVGISKAQTKVELRKAIQLALTYDSRVLIEQGVVAREIE) contacts ATP. Asp-288, Glu-301, and Asn-303 together coordinate Mg(2+).

It belongs to the D-alanine--D-alanine ligase family. Requires Mg(2+) as cofactor. The cofactor is Mn(2+).

The protein localises to the cytoplasm. The catalysed reaction is 2 D-alanine + ATP = D-alanyl-D-alanine + ADP + phosphate + H(+). The protein operates within cell wall biogenesis; peptidoglycan biosynthesis. Functionally, cell wall formation. This is D-alanine--D-alanine ligase from Streptococcus pyogenes serotype M18 (strain MGAS8232).